The following is a 181-amino-acid chain: NADH-quinone oxidoreductase subunit I (181 aa).

2 4Fe-4S ferredoxin-type domains span residues 51 to 80 (TRNS…LKKS) and 90 to 119 (KSFQ…LTPD). [4Fe-4S] cluster is bound by residues cysteine 60, cysteine 63, cysteine 66, cysteine 70, cysteine 99, cysteine 102, cysteine 105, and cysteine 109.

This sequence belongs to the complex I 23 kDa subunit family. NDH-1 is composed of 13 different subunits. Subunits NuoA, H, J, K, L, M, N constitute the membrane sector of the complex. Requires [4Fe-4S] cluster as cofactor.

It is found in the cell membrane. The enzyme catalyses a quinone + NADH + 5 H(+)(in) = a quinol + NAD(+) + 4 H(+)(out). NDH-1 shuttles electrons from NADH, via FMN and iron-sulfur (Fe-S) centers, to quinones in the respiratory chain. The immediate electron acceptor for the enzyme in this species is believed to be ubiquinone. Couples the redox reaction to proton translocation (for every two electrons transferred, four hydrogen ions are translocated across the cytoplasmic membrane), and thus conserves the redox energy in a proton gradient. This Buchnera aphidicola subsp. Cinara cedri (strain Cc) protein is NADH-quinone oxidoreductase subunit I.